A 223-amino-acid chain; its full sequence is Peptidyl-prolyl cis-trans isomerase, mitochondrial (223 aa).

Residues 1 to 44 (MFGPRHFSVLKTTGSLVSSTFSSSLKPTATFSCARAFSQTSSIM) constitute a mitochondrion transit peptide. Positions 62-222 (NKPTSEIKAQ…KKPTIVDCGA (161 aa)) constitute a PPIase cyclophilin-type domain.

Belongs to the cyclophilin-type PPIase family.

The protein localises to the mitochondrion. It is found in the cytoplasm. The enzyme catalyses [protein]-peptidylproline (omega=180) = [protein]-peptidylproline (omega=0). Binds cyclosporin A (CsA). CsA mediates some of its effects via an inhibitory action on PPIase. PPIases accelerate the folding of proteins. It catalyzes the cis-trans isomerization of proline imidic peptide bonds in oligopeptides. This chain is Peptidyl-prolyl cis-trans isomerase, mitochondrial (csr-1), found in Neurospora crassa (strain ATCC 24698 / 74-OR23-1A / CBS 708.71 / DSM 1257 / FGSC 987).